The following is a 101-amino-acid chain: Ubiquitin-related modifier 1 (101 aa).

Gly101 carries the 1-thioglycine modification. Gly101 participates in a covalent cross-link: Glycyl lysine isopeptide (Gly-Lys) (interchain with K-? in acceptor proteins).

This sequence belongs to the URM1 family. Post-translationally, C-terminal thiocarboxylation occurs in 2 steps, it is first acyl-adenylated (-COAMP) via the hesA/moeB/thiF part of the MOCS3 homolog, then thiocarboxylated (-COSH) via the rhodanese domain of the MOCS3 homolog.

The protein resides in the cytoplasm. Its pathway is tRNA modification; 5-methoxycarbonylmethyl-2-thiouridine-tRNA biosynthesis. Its function is as follows. Acts as a sulfur carrier required for 2-thiolation of mcm(5)S(2)U at tRNA wobble positions of cytosolic tRNA(Lys), tRNA(Glu) and tRNA(Gln). Serves as sulfur donor in tRNA 2-thiolation reaction by being thiocarboxylated (-COSH) at its C-terminus by MOCS3. The sulfur is then transferred to tRNA to form 2-thiolation of mcm(5)S(2)U. Also acts as a ubiquitin-like protein (UBL) that is covalently conjugated via an isopeptide bond to lysine residues of target proteins. The thiocarboxylated form serves as substrate for conjugation and oxidative stress specifically induces the formation of UBL-protein conjugates. This Gallus gallus (Chicken) protein is Ubiquitin-related modifier 1.